Here is a 119-residue protein sequence, read N- to C-terminus: Chymotrypsin inhibitor WCI (119 aa).

Intrachain disulfides connect cysteine 6-cysteine 55, cysteine 20-cysteine 44, cysteine 29-cysteine 87, cysteine 45-cysteine 105, and cysteine 57-cysteine 116.

The protein localises to the secreted. Its function is as follows. Inhibits bovine, insect and wheat chymotrypsins. Inhibits bovine chymotrypsin with Ki of 0.6 nM. Does not inhibit human or wheat alpha-amylases, bovine pancreatic trypsin, or trypsin-like activity isolated from wheat. This Triticum aestivum (Wheat) protein is Chymotrypsin inhibitor WCI.